The chain runs to 149 residues: Large ribosomal subunit protein bL9 (149 aa).

It belongs to the bacterial ribosomal protein bL9 family.

In terms of biological role, binds to the 23S rRNA. This chain is Large ribosomal subunit protein bL9, found in Enterobacter sp. (strain 638).